The following is a 189-amino-acid chain: UPF0340 protein EF_1967 (189 aa).

This sequence belongs to the UPF0340 family.

This is UPF0340 protein EF_1967 from Enterococcus faecalis (strain ATCC 700802 / V583).